A 103-amino-acid chain; its full sequence is N(4)-acetylcytidine amidohydrolase (103 aa).

Residues 6-92 (TFFERFEQDI…VIQEIYPGLE (87 aa)) form the ASCH domain. Catalysis depends on Lys20, which acts as the Proton acceptor. Residue Thr23 is the Nucleophile of the active site. Glu73 functions as the Proton donor in the catalytic mechanism.

This sequence belongs to the N(4)-acetylcytidine amidohydrolase family.

The catalysed reaction is N(4)-acetylcytidine + H2O = cytidine + acetate + H(+). It catalyses the reaction N(4)-acetyl-2'-deoxycytidine + H2O = 2'-deoxycytidine + acetate + H(+). The enzyme catalyses N(4)-acetylcytosine + H2O = cytosine + acetate + H(+). Its function is as follows. Catalyzes the hydrolysis of N(4)-acetylcytidine (ac4C). The chain is N(4)-acetylcytidine amidohydrolase from Shewanella sp. (strain MR-4).